The chain runs to 349 residues: Homeobox-leucine zipper protein HOX5 (349 aa).

The segment at residues 83-142 (APEKKRRLTAEQVQMLERSFEEENKLEPERKTELARRLGMAPRQVAVWFQNRRARWKTKQ) is a DNA-binding region (homeobox). The segment at 141 to 185 (KQLEHDFDRLKAAYDALAADHHALLSDNDRLRAQVISLTEKLQDK) is leucine-zipper. The tract at residues 181 to 253 (KLQDKETSPS…GTNDDGDGGA (73 aa)) is disordered. The segment covering 188–198 (SPSSATITTAA) has biased composition (low complexity).

It belongs to the HD-ZIP homeobox family. Class I subfamily. In terms of assembly, homodimer. May form a heterodimer with HOX4. Expressed in seedlings, roots, leaves, nodes, internodes, flowers and embryo.

It is found in the nucleus. Its function is as follows. Probable transcription activator that binds to the DNA sequence 5'-CAAT[AT]ATTG-3'. The protein is Homeobox-leucine zipper protein HOX5 (HOX5) of Oryza sativa subsp. japonica (Rice).